Consider the following 320-residue polypeptide: Polyprenyl transferase pyr6 (320 aa).

The next 6 helical transmembrane spans lie at 22–42 (KYNC…AAAS), 60–80 (GLAF…NDWI), 101–121 (LATR…VWLM), 127–147 (GQNL…YPFG), 155–175 (LGIY…LPAW), and 186–206 (PDLL…TIYF). The N-linked (GlcNAc...) asparagine glycan is linked to Asn-224. A helical transmembrane segment spans residues 233 to 253 (YVHGLLLLQAVAVVMVIPWIL). The N-linked (GlcNAc...) asparagine glycan is linked to Asn-256. The next 2 helical transmembrane spans lie at 260–280 (WLWF…LYLF) and 296–316 (FALG…VSGS).

Belongs to the UbiA prenyltransferase family. It depends on Mg(2+) as a cofactor.

The protein resides in the membrane. It catalyses the reaction 4-hydroxy-6-(pyridin-3-yl)-2H-pyran-2-one + (2E,6E)-farnesyl diphosphate = 4-hydroxy-3-[(2E,6E)-farnesyl]-6-(pyridin-3-yl)-2H-pyran-2-one + diphosphate. It functions in the pathway secondary metabolite biosynthesis; terpenoid biosynthesis. Polyprenyl transferase; part of the gene cluster that mediates the biosynthesis of pyripyropene A, a specific human acyl-coenzyme A:cholesterol acyltransferase 2 inhibitor. The first step of the pathway is the synthesis of nicotinyl-CoA from nicotinic acid by the nicotinic acid-CoA ligase pyr1. Nicotinyl-CoA is then a substrate of polyketide synthase pyr2 to produce 4-hydroxy-6-(3-pyridinyl)-2H-pyran-2-one (HPPO) which is further prenylated by the polyprenyl transferase pyr6 to yield farnesyl-HPPO. The next steps consist of an epoxidation of farnesyl-HPPO to epoxyfarnesyl-HPPO by FAD-dependent monooxygenase pyr5 and a cyclization of the terpenoid portion by the terpene cyclase pyr4 to yield deacetyl-pyripyropene E. The 2 cytochrome P450 monooxygenases pyr3 and pyr9, and the 2 acetyltransferases pyr7 and pyr8 are involved in the conversion of deacetyl-pyripyropene E into pyripyropene A through several cycles of oxidation and acetylation steps. Pyr7 acetylates deacetyl-pyripyropene E to pyripyropene E which is oxidized to 11-deacetyl-pyripyropene O by pyr3, which is in turn acetylated into pyripyropene O by pyr8. Pyripyropene O is then oxidized to deacetyl-pyripyropene A by pyr9. Deacetyl-pyripyropene A is finally acetylated to pyripyropene A by pyr8. The polypeptide is Polyprenyl transferase pyr6 (Aspergillus fumigatus (strain ATCC MYA-4609 / CBS 101355 / FGSC A1100 / Af293) (Neosartorya fumigata)).